Consider the following 84-residue polypeptide: Small ribosomal subunit protein uS17c (84 aa).

It belongs to the universal ribosomal protein uS17 family. In terms of assembly, part of the 30S ribosomal subunit.

The protein resides in the plastid. It localises to the chloroplast. One of the primary rRNA binding proteins, it binds specifically to the 5'-end of 16S ribosomal RNA. The protein is Small ribosomal subunit protein uS17c (rps17) of Trieres chinensis (Marine centric diatom).